The following is a 435-amino-acid chain: Trigger factor (435 aa).

The PPIase FKBP-type domain maps to 162–247; that stretch reads GDRINIDYRG…LSGVESSKLP (86 aa).

It belongs to the FKBP-type PPIase family. Tig subfamily.

It is found in the cytoplasm. It catalyses the reaction [protein]-peptidylproline (omega=180) = [protein]-peptidylproline (omega=0). Its function is as follows. Involved in protein export. Acts as a chaperone by maintaining the newly synthesized protein in an open conformation. Functions as a peptidyl-prolyl cis-trans isomerase. The chain is Trigger factor from Nitrosospira multiformis (strain ATCC 25196 / NCIMB 11849 / C 71).